The following is a 424-amino-acid chain: Catabolic NAD-specific glutamate dehydrogenase RocG (424 aa).

Substrate-binding residues include K80 and K104. K116 serves as the catalytic Proton donor. Residues T200 and N231 each contribute to the NAD(+) site. A substrate-binding site is contributed by S358.

The protein belongs to the Glu/Leu/Phe/Val dehydrogenases family. As to quaternary structure, homohexamer. Interacts with transcriptional regulator GltC.

It carries out the reaction L-glutamate + NAD(+) + H2O = 2-oxoglutarate + NH4(+) + NADH + H(+). Functionally, devoted to catabolic function of glutamate (and other amino acids of the glutamate family) utilization as sole nitrogen source. It is not involved in anabolic function of glutamate biosynthesis since B.subtilis possesses only one route of glutamate biosynthesis from ammonia, catalyzed by glutamate synthase. Wild-type cells are unable to utilize glutamate or glutamine as a sole carbon source; thus RocG does not function physiologically to synthesize glutamate, but it is involved in the utilization of arginine, and proline as carbon or nitrogen source. The catabolic RocG is essential for controlling gltAB expression via an inhibitory interactions with the transcriptional regulator GltC in response to the availability of sugars. The chain is Catabolic NAD-specific glutamate dehydrogenase RocG from Bacillus subtilis (strain 168).